Reading from the N-terminus, the 257-residue chain is Ribosome-recycling factor, mitochondrial (257 aa).

It belongs to the RRF family.

The protein localises to the mitochondrion. Functionally, necessary for protein synthesis in mitochondria. Functions as a ribosome recycling factor in mitochondria. The polypeptide is Ribosome-recycling factor, mitochondrial (RRF1) (Debaryomyces hansenii (strain ATCC 36239 / CBS 767 / BCRC 21394 / JCM 1990 / NBRC 0083 / IGC 2968) (Yeast)).